Consider the following 340-residue polypeptide: Entry-fusion complex protein OPG094 (340 aa).

The disordered stretch occupies residues 1–20 (MGGGVSVELPKRDPPPGVPT). The N-myristoyl glycine; by host moiety is linked to residue glycine 2. Residues 2–319 (GGGVSVELPK…VQHNIKHSFD (318 aa)) lie on the Virion surface side of the membrane. A helical; Signal-anchor for type II membrane protein membrane pass occupies residues 320–340 (LKLHLISLLSLLVIWILIVAI).

The protein belongs to the orthopoxvirus OPG086 family. As to quaternary structure, interacts with OPG143. Component of the entry fusion complex (EFC) composed of OPG053, OPG076, OPG086, OPG094, OPG095, OPG099, OPG107, OPG143, OPG104, OPG147 and OPG155. Except for OPG095 and OPG053, each of the EFC proteins is required for assembly or stability of the complex. Unglycosylated because produced in viral factories instead of the classic ER -Golgi route.

It is found in the virion membrane. In terms of biological role, component of the entry fusion complex (EFC), which consists of 11 proteins. During cell infection, this complex mediates entry of the virion core into the host cytoplasm by a two-step mechanism consisting of lipid mixing of the viral and cellular membranes and subsequent pore formation. This Cynomys gunnisoni (Gunnison's prairie dog) protein is Entry-fusion complex protein OPG094 (OPG094).